The sequence spans 283 residues: ATP synthase gamma chain (283 aa).

Belongs to the ATPase gamma chain family. As to quaternary structure, F-type ATPases have 2 components, CF(1) - the catalytic core - and CF(0) - the membrane proton channel. CF(1) has five subunits: alpha(3), beta(3), gamma(1), delta(1), epsilon(1). CF(0) has three main subunits: a, b and c.

It is found in the cell membrane. Its function is as follows. Produces ATP from ADP in the presence of a proton gradient across the membrane. The gamma chain is believed to be important in regulating ATPase activity and the flow of protons through the CF(0) complex. The sequence is that of ATP synthase gamma chain from Clostridium beijerinckii (strain ATCC 51743 / NCIMB 8052) (Clostridium acetobutylicum).